The sequence spans 652 residues: RNA-binding E3 ubiquitin-protein ligase MEX3C (652 aa).

Disordered regions lie at residues 15–39 and 80–136; these read AAPA…ELEG and QARR…EDRP. A compositionally biased stretch (pro residues) spans 18-33; sequence APLPQPPPLPPPPPAG. The segment covering 101–134 has biased composition (acidic residues); that stretch reads AELELEVDEEEGEEAELDGELLEEEELEEAEEED. 2 KH domains span residues 225-286 and 319-380; these read TTEC…KREI and QTTV…REEI. Disordered regions lie at residues 429-448 and 506-566; these read ARMM…SGST and FEPV…HVGL. Residues 430 to 448 show a composition bias toward low complexity; the sequence is RMMSNYRNDSSSSLGSGST. Residues 519–537 show a composition bias toward polar residues; the sequence is PSGNMKTQRRGSQPSTPRL. A phosphoserine mark is found at serine 530 and serine 538. Residues 544–555 are compositionally biased toward basic and acidic residues; it reads SIEHPLARRVRS. An RING-type zinc finger spans residues 601–641; the sequence is CVICFENEVIAALVPCGHNLFCMECANKICEKRTPSCPVCQ.

As to quaternary structure, interacts with USP7, which antagonizes the ability to degrade mRNA. In terms of processing, phosphorylated.

It localises to the nucleus. It is found in the cytoplasm. It carries out the reaction S-ubiquitinyl-[E2 ubiquitin-conjugating enzyme]-L-cysteine + [acceptor protein]-L-lysine = [E2 ubiquitin-conjugating enzyme]-L-cysteine + N(6)-ubiquitinyl-[acceptor protein]-L-lysine.. Its function is as follows. RNA-binding protein. May be involved in post-transcriptional regulatory mechanisms, modulating levels of some mRNAs by promoting their degradation in a way involving ubiquitin ligase activity. May act as suppressor of replication stress and chromosome missegregation. This chain is RNA-binding E3 ubiquitin-protein ligase MEX3C (Mex3c), found in Mus musculus (Mouse).